We begin with the raw amino-acid sequence, 514 residues long: Cytochrome P450 monooxygenase FUS8 (514 aa).

Residues 24–44 traverse the membrane as a helical segment; the sequence is VFENLTVTNTVCAFIALFIIV. N-linked (GlcNAc...) asparagine glycosylation is found at Asn225 and Asn443. A heme-binding site is contributed by Cys460.

This sequence belongs to the cytochrome P450 family. Heme is required as a cofactor.

Its subcellular location is the membrane. It participates in mycotoxin biosynthesis. Cytochrome P450 monooxygenase; part of the gene cluster that mediates the biosynthesis of the mycotoxin fusarin C. Within the cluster, FUS1, FUS2, FUS8 and FUS9 are sufficient for fusarin production. The roles of the other FUS members are yet undetermined. The fusarin C synthetase FUS1 is responsible for the condensation of one acetyl-coenzyme A (CoA) unit with six malonyl-CoA units and the amide linkage of the arising heptaketide and homoserine, subsequently releasing the first intermediate, prefusarin, as an alcohol with an open ring structure. The cytochrome P450 monooxygenase FUS8 participates in multiple oxidation processes at carbon C-20 and is able to use the FUS1 product as substrate, resulting in formation of 20-hydroxy-prefusarin. This reaction seems to be essential before the 2-pyrrolidone ring closure can be catalyzed by FUS2, generating 20-hydroxy-fusarin. FUS8 is able to further oxidizes carbon C-20 after ring closure, resulting in the formation of carboxy-fusarin C. As the last step, FUS9 methylates the hydroxyl group at C-21 to generate fusarin C. Fusarin C can then rearrange to epi-fusarin C, the (z)-isomers, and fusarin A and fusarin D. The protein is Cytochrome P450 monooxygenase FUS8 of Gibberella fujikuroi (strain CBS 195.34 / IMI 58289 / NRRL A-6831) (Bakanae and foot rot disease fungus).